The following is a 302-amino-acid chain: Bifunctional protein FolD (302 aa).

NADP(+) contacts are provided by residues 165–167 (GRS), serine 190, and isoleucine 231.

Belongs to the tetrahydrofolate dehydrogenase/cyclohydrolase family. As to quaternary structure, homodimer.

It carries out the reaction (6R)-5,10-methylene-5,6,7,8-tetrahydrofolate + NADP(+) = (6R)-5,10-methenyltetrahydrofolate + NADPH. The enzyme catalyses (6R)-5,10-methenyltetrahydrofolate + H2O = (6R)-10-formyltetrahydrofolate + H(+). The protein operates within one-carbon metabolism; tetrahydrofolate interconversion. Catalyzes the oxidation of 5,10-methylenetetrahydrofolate to 5,10-methenyltetrahydrofolate and then the hydrolysis of 5,10-methenyltetrahydrofolate to 10-formyltetrahydrofolate. The chain is Bifunctional protein FolD from Prochlorococcus marinus (strain MIT 9303).